A 340-amino-acid polypeptide reads, in one-letter code: uncharacterized protein (340 aa).

This is an uncharacterized protein from Enterobacteria phage T4 (Bacteriophage T4).